Here is a 250-residue protein sequence, read N- to C-terminus: Complement factor B-like protease (250 aa).

3 consecutive Sushi domains span residues 3-73 (TRCD…KCRA), 74-133 (VWCP…VCDD), and 136-193 (GDCP…QCRA). Disulfide bonds link Cys5-Cys44, Cys30-Cys71, Cys76-Cys118, Cys104-Cys131, Cys138-Cys178, and Cys164-Cys191. Asn115 carries an N-linked (GlcNAc...) asparagine glycan. An N-linked (GlcNAc...) asparagine glycan is attached at Asn221.

The protein belongs to the peptidase S1 family. As to expression, plasma.

It is found in the secreted. Functionally, required in both the classical and alternate pathways of the complement system. The polypeptide is Complement factor B-like protease (Gallus gallus (Chicken)).